Here is a 445-residue protein sequence, read N- to C-terminus: Argininosuccinate synthase (445 aa).

Residues 17–25 (AFSGGLDTS) and Ala43 each bind ATP. Tyr99 lines the L-citrulline pocket. Residues Gly129 and Thr131 each contribute to the ATP site. L-aspartate contacts are provided by Thr131, Asn135, and Asp136. Asn135 contributes to the L-citrulline binding site. Asp136 serves as a coordination point for ATP. L-citrulline-binding residues include Arg139 and Ser192. Residue Asp194 coordinates ATP. L-citrulline contacts are provided by Thr201, Glu203, and Glu280.

This sequence belongs to the argininosuccinate synthase family. Type 2 subfamily. In terms of assembly, homotetramer.

The protein resides in the cytoplasm. It catalyses the reaction L-citrulline + L-aspartate + ATP = 2-(N(omega)-L-arginino)succinate + AMP + diphosphate + H(+). Its pathway is amino-acid biosynthesis; L-arginine biosynthesis; L-arginine from L-ornithine and carbamoyl phosphate: step 2/3. This Burkholderia ambifaria (strain ATCC BAA-244 / DSM 16087 / CCUG 44356 / LMG 19182 / AMMD) (Burkholderia cepacia (strain AMMD)) protein is Argininosuccinate synthase.